A 231-amino-acid polypeptide reads, in one-letter code: 2-C-methyl-D-erythritol 4-phosphate cytidylyltransferase (231 aa).

It belongs to the IspD/TarI cytidylyltransferase family. IspD subfamily.

It catalyses the reaction 2-C-methyl-D-erythritol 4-phosphate + CTP + H(+) = 4-CDP-2-C-methyl-D-erythritol + diphosphate. Its pathway is isoprenoid biosynthesis; isopentenyl diphosphate biosynthesis via DXP pathway; isopentenyl diphosphate from 1-deoxy-D-xylulose 5-phosphate: step 2/6. Catalyzes the formation of 4-diphosphocytidyl-2-C-methyl-D-erythritol from CTP and 2-C-methyl-D-erythritol 4-phosphate (MEP). In Xylella fastidiosa (strain M23), this protein is 2-C-methyl-D-erythritol 4-phosphate cytidylyltransferase.